A 367-amino-acid polypeptide reads, in one-letter code: tRNA/tmRNA (uracil-C(5))-methyltransferase (367 aa).

Residues Q190, Y218, N223, E239, and D299 each contribute to the S-adenosyl-L-methionine site. C324 serves as the catalytic Nucleophile. Residue E358 is the Proton acceptor of the active site.

This sequence belongs to the class I-like SAM-binding methyltransferase superfamily. RNA M5U methyltransferase family. TrmA subfamily.

The enzyme catalyses uridine(54) in tRNA + S-adenosyl-L-methionine = 5-methyluridine(54) in tRNA + S-adenosyl-L-homocysteine + H(+). It catalyses the reaction uridine(341) in tmRNA + S-adenosyl-L-methionine = 5-methyluridine(341) in tmRNA + S-adenosyl-L-homocysteine + H(+). In terms of biological role, dual-specificity methyltransferase that catalyzes the formation of 5-methyluridine at position 54 (m5U54) in all tRNAs, and that of position 341 (m5U341) in tmRNA (transfer-mRNA). The sequence is that of tRNA/tmRNA (uracil-C(5))-methyltransferase from Pectobacterium atrosepticum (strain SCRI 1043 / ATCC BAA-672) (Erwinia carotovora subsp. atroseptica).